A 319-amino-acid chain; its full sequence is 1-aminocyclopropane-1-carboxylate oxidase 1 (319 aa).

The Fe2OG dioxygenase domain maps to 153-253 (PNFGTKVSNY…RMSLASFYNP (101 aa)). His177, Asp179, and His234 together coordinate Fe cation.

It belongs to the iron/ascorbate-dependent oxidoreductase family. Fe cation serves as cofactor.

The catalysed reaction is 1-aminocyclopropane-1-carboxylate + L-ascorbate + O2 = ethene + L-dehydroascorbate + hydrogen cyanide + CO2 + 2 H2O. Its pathway is alkene biosynthesis; ethylene biosynthesis via S-adenosyl-L-methionine; ethylene from S-adenosyl-L-methionine: step 2/2. The protein is 1-aminocyclopropane-1-carboxylate oxidase 1 (ACO1) of Petunia hybrida (Petunia).